A 353-amino-acid chain; its full sequence is UPF0283 membrane protein YcjF (353 aa).

Residues 16-35 (KEESTSAFKAQQTFSEAESR) are disordered. Residues 20–31 (TSAFKAQQTFSE) show a composition bias toward polar residues. Helical transmembrane passes span 70–90 (MVMGGLALFGASVVGQGVQWT), 100–120 (VALGGCAAGALIIGAGVGSVV), and 213–233 (ESTLMIAVSPLALVDMAFIAW).

This sequence belongs to the UPF0283 family.

It localises to the cell inner membrane. The polypeptide is UPF0283 membrane protein YcjF (Salmonella heidelberg (strain SL476)).